Reading from the N-terminus, the 108-residue chain is Peptidyl-prolyl cis-trans isomerase FKBP1B (108 aa).

A PPIase FKBP-type domain is found at 20 to 108; sequence GQTCVVHYTG…IFDVELLNLE (89 aa).

As to quaternary structure, identified in a complex composed of RYR2, FKBP1B, PKA catalytic subunit, PRKAR2A, AKAP6, and the protein phosphatases PP2A and PP1. Interacts directly with RYR2.

It is found in the cytoplasm. The protein resides in the sarcoplasmic reticulum. The enzyme catalyses [protein]-peptidylproline (omega=180) = [protein]-peptidylproline (omega=0). Its activity is regulated as follows. Inhibited by both FK506 and rapamycin. In terms of biological role, has the potential to contribute to the immunosuppressive and toxic effects of FK506 and rapamycin. PPIases accelerate the folding of proteins. It catalyzes the cis-trans isomerization of proline imidic peptide bonds in oligopeptides. The sequence is that of Peptidyl-prolyl cis-trans isomerase FKBP1B (FKBP1B) from Bos taurus (Bovine).